A 1453-amino-acid chain; its full sequence is Spike glycoprotein (1453 aa).

The first 31 residues, 1–31 (MIVLILCLLLFSYNSVICTSNNDCVQGNVTQ), serve as a signal peptide directing secretion. S1 stretches follow at residues 19–791 (TSNN…ERTR) and 32–780 (LPGN…FYYY). At 32–1394 (LPGNENIIKD…NRIETYVKWP (1363 aa)) the chain is on the virion surface side. Residues 661-805 (VIYEEGDNIV…DSNDVDCEPI (145 aa)) form an interaction with host ANPEP region. 2 S2 regions span residues 781–1453 (SIYN…VHVH) and 794–1453 (AIDS…VHVH). Positions 1026-1047 (AGGITLGSLGGGAVSIPFAIAV) are fusion peptide. Positions 1041 to 1160 (IPFAIAVQAR…QVDRLITGRL (120 aa)) are heptad repeat 1 (HR1). 2 coiled-coil regions span residues 1108–1152 (QDVV…DAQV) and 1342–1384 (TYLN…LEWL). The interval 1309–1406 (PDYIDINQTV…VWLLIGLVVI (98 aa)) is heptad repeat 2 (HR2). Residues 1395–1414 (WYVWLLIGLVVIFCIPILLF) traverse the membrane as a helical segment. The Intravirion segment spans residues 1415 to 1453 (CCCSTGCCGCIGCLGSCCHSICSRRQFESYEPIEKVHVH). The KxHxx signature appears at 1449 to 1453 (KVHVH).

This sequence belongs to the alphacoronaviruses spike protein family. As to quaternary structure, homotrimer. During virus morphogenesis, found in a complex with M and HE proteins. Interacts with host ANPEP.

The protein localises to the virion membrane. Its subcellular location is the host endoplasmic reticulum-Golgi intermediate compartment membrane. In terms of biological role, S1 region attaches the virion to the cell membrane by interacting with host ANPEP/aminopeptidase N, initiating the infection. Binding to the receptor probably induces conformational changes in the S glycoprotein unmasking the fusion peptide of S2 region and activating membranes fusion. S2 region belongs to the class I viral fusion protein. Under the current model, the protein has at least 3 conformational states: pre-fusion native state, pre-hairpin intermediate state, and post-fusion hairpin state. During viral and target cell membrane fusion, the coiled coil regions (heptad repeats) regions assume a trimer-of-hairpins structure, positioning the fusion peptide in close proximity to the C-terminal region of the ectodomain. The formation of this structure appears to drive apposition and subsequent fusion of viral and target cell membranes. This is Spike glycoprotein from Canis lupus familiaris (Dog).